The primary structure comprises 147 residues: Protein MC014 (147 aa).

It localises to the host nucleus. The chain is Protein MC014 (MC014) from Homo sapiens (Human).